We begin with the raw amino-acid sequence, 457 residues long: RuvB-like helicase 1 (457 aa).

Residue 72 to 79 coordinates ATP; sequence GAPGTGKT.

This sequence belongs to the RuvB family. In terms of assembly, may form heterododecamers with RVB2. Component of the SWR1 chromatin remodeling complex, the INO80 chromatin remodeling complex, and of the R2TP complex.

Its subcellular location is the nucleus. The catalysed reaction is ATP + H2O = ADP + phosphate + H(+). Its function is as follows. DNA helicase which participates in several chromatin remodeling complexes, including the SWR1 and the INO80 complexes. The SWR1 complex mediates the ATP-dependent exchange of histone H2A for the H2A variant HZT1 leading to transcriptional regulation of selected genes by chromatin remodeling. The INO80 complex remodels chromatin by shifting nucleosomes and is involved in DNA repair. Also involved in pre-rRNA processing. This Debaryomyces hansenii (strain ATCC 36239 / CBS 767 / BCRC 21394 / JCM 1990 / NBRC 0083 / IGC 2968) (Yeast) protein is RuvB-like helicase 1 (RBV1).